A 77-amino-acid polypeptide reads, in one-letter code: SS18-like protein 2 (77 aa).

Residues 50–53 (YQHV) carry the SH2-binding motif.

Belongs to the SS18 family.

The sequence is that of SS18-like protein 2 (SS18L2) from Homo sapiens (Human).